A 108-amino-acid polypeptide reads, in one-letter code: ATP synthase peripheral stalk subunit F6, mitochondrial (108 aa).

A mitochondrion-targeting transit peptide spans 1–32 (MILQRLFRFSSIIRSAVSVHFRRNIGVTAVAF). N6-acetyllysine occurs at positions 41, 46, and 79. N6-acetyllysine; alternate occurs at positions 84, 94, and 99. 3 positions are modified to N6-succinyllysine; alternate: Lys-84, Lys-94, and Lys-99. Position 105 is an N6-acetyllysine (Lys-105).

It belongs to the eukaryotic ATPase subunit F6 family. Component of the ATP synthase complex composed at least of ATP5F1A/subunit alpha, ATP5F1B/subunit beta, ATP5MC1/subunit c (homooctomer), MT-ATP6/subunit a, MT-ATP8/subunit 8, ATP5ME/subunit e, ATP5MF/subunit f, ATP5MG/subunit g, ATP5MK/subunit k, ATP5MJ/subunit j, ATP5F1C/subunit gamma, ATP5F1D/subunit delta, ATP5F1E/subunit epsilon, ATP5PF/subunit F6, ATP5PB/subunit b, ATP5PD/subunit d, ATP5PO/subunit OSCP. ATP synthase complex consists of a soluble F(1) head domain (subunits alpha(3) and beta(3)) - the catalytic core - and a membrane F(0) domain - the membrane proton channel (subunits c, a, 8, e, f, g, k and j). These two domains are linked by a central stalk (subunits gamma, delta, and epsilon) rotating inside the F1 region and a stationary peripheral stalk (subunits F6, b, d, and OSCP).

The protein resides in the mitochondrion. The protein localises to the mitochondrion inner membrane. Subunit F6, of the mitochondrial membrane ATP synthase complex (F(1)F(0) ATP synthase or Complex V) that produces ATP from ADP in the presence of a proton gradient across the membrane which is generated by electron transport complexes of the respiratory chain. ATP synthase complex consist of a soluble F(1) head domain - the catalytic core - and a membrane F(1) domain - the membrane proton channel. These two domains are linked by a central stalk rotating inside the F(1) region and a stationary peripheral stalk. During catalysis, ATP synthesis in the catalytic domain of F(1) is coupled via a rotary mechanism of the central stalk subunits to proton translocation. In vivo, can only synthesize ATP although its ATP hydrolase activity can be activated artificially in vitro. Part of the complex F(0) domain. Part of the complex F(0) domain and the peripheric stalk, which acts as a stator to hold the catalytic alpha(3)beta(3) subcomplex and subunit a/ATP6 static relative to the rotary elements. This chain is ATP synthase peripheral stalk subunit F6, mitochondrial, found in Macaca fascicularis (Crab-eating macaque).